The sequence spans 550 residues: CTP synthase (550 aa).

Residues methionine 1–leucine 270 form an amidoligase domain region. Residue serine 13 participates in CTP binding. Residue serine 13 coordinates UTP. Residues serine 14–isoleucine 19 and aspartate 71 each bind ATP. Aspartate 71 and glutamate 144 together coordinate Mg(2+). CTP is bound by residues aspartate 151 to glutamate 153, lysine 191 to glutamine 196, and lysine 227. UTP is bound by residues lysine 191–glutamine 196 and lysine 227. The region spanning threonine 295–alanine 547 is the Glutamine amidotransferase type-1 domain. Glycine 356 is a binding site for L-glutamine. The active-site Nucleophile; for glutamine hydrolysis is the cysteine 383. Residues leucine 384–glutamine 387, glutamate 407, and arginine 473 contribute to the L-glutamine site. Catalysis depends on residues histidine 520 and glutamate 522.

The protein belongs to the CTP synthase family. Homotetramer.

It carries out the reaction UTP + L-glutamine + ATP + H2O = CTP + L-glutamate + ADP + phosphate + 2 H(+). It catalyses the reaction L-glutamine + H2O = L-glutamate + NH4(+). The enzyme catalyses UTP + NH4(+) + ATP = CTP + ADP + phosphate + 2 H(+). The protein operates within pyrimidine metabolism; CTP biosynthesis via de novo pathway; CTP from UDP: step 2/2. With respect to regulation, allosterically activated by GTP, when glutamine is the substrate; GTP has no effect on the reaction when ammonia is the substrate. The allosteric effector GTP functions by stabilizing the protein conformation that binds the tetrahedral intermediate(s) formed during glutamine hydrolysis. Inhibited by the product CTP, via allosteric rather than competitive inhibition. Functionally, catalyzes the ATP-dependent amination of UTP to CTP with either L-glutamine or ammonia as the source of nitrogen. Regulates intracellular CTP levels through interactions with the four ribonucleotide triphosphates. The protein is CTP synthase of Burkholderia lata (strain ATCC 17760 / DSM 23089 / LMG 22485 / NCIMB 9086 / R18194 / 383).